The sequence spans 150 residues: MSEASGERPRVEIWTDGGCKPNPGPGGWGALLVCRGQEKELLGGDPETTNNRMELTAAAEALEALKRPCIVTLHTDSEYLRNGITRWHTGWVRRKWRNAAGDPVANMDLWQRILEAAKPHEIDWLWVKGHSGDENNERVDQLATRGREEL.

The RNase H type-1 domain maps to 7 to 148 (ERPRVEIWTD…VDQLATRGRE (142 aa)). 4 residues coordinate Mg(2+): Asp-16, Glu-54, Asp-76, and Asp-140.

Belongs to the RNase H family. Monomer. Mg(2+) serves as cofactor.

The protein localises to the cytoplasm. The catalysed reaction is Endonucleolytic cleavage to 5'-phosphomonoester.. In terms of biological role, endonuclease that specifically degrades the RNA of RNA-DNA hybrids. The chain is Ribonuclease H from Gluconobacter oxydans (strain 621H) (Gluconobacter suboxydans).